The sequence spans 84 residues: Molybdopterin synthase sulfur carrier subunit (84 aa).

Glycine 84 bears the 1-thioglycine; alternate mark. Glycine 84 bears the Glycyl adenylate; alternate mark.

The protein belongs to the MoaD family. MOCS2A subfamily. As to quaternary structure, heterotetramer; composed of 2 small (MOCS2A) and 2 large (MOCS2B) subunits. C-terminal thiocarboxylation occurs in 2 steps, it is first acyl-adenylated (-COAMP) via the hesA/moeB/thiF part of MOCS3, then thiocarboxylated (-COSH) via the rhodanese domain of MOCS3.

The protein localises to the cytoplasm. It participates in cofactor biosynthesis; molybdopterin biosynthesis. In terms of biological role, acts as a sulfur carrier required for molybdopterin biosynthesis. Component of the molybdopterin synthase complex that catalyzes the conversion of precursor Z into molybdopterin by mediating the incorporation of 2 sulfur atoms into precursor Z to generate a dithiolene group. In the complex, serves as sulfur donor by being thiocarboxylated (-COSH) at its C-terminus by MOCS3. After interaction with MOCS2B, the sulfur is then transferred to precursor Z to form molybdopterin. The protein is Molybdopterin synthase sulfur carrier subunit of Caenorhabditis briggsae.